We begin with the raw amino-acid sequence, 147 residues long: Small ribosomal subunit protein uS12 (147 aa).

Belongs to the universal ribosomal protein uS12 family. Part of the 30S ribosomal subunit.

With S4 and S5 plays an important role in translational accuracy. Located at the interface of the 30S and 50S subunits. The chain is Small ribosomal subunit protein uS12 from Pyrobaculum arsenaticum (strain DSM 13514 / JCM 11321 / PZ6).